We begin with the raw amino-acid sequence, 142 residues long: Small ribosomal subunit protein uS12 (142 aa).

Residues M1 to Q44 are disordered. Residues L11–L32 are compositionally biased toward basic and acidic residues.

The protein belongs to the universal ribosomal protein uS12 family. Part of the 30S ribosomal subunit.

Functionally, with S4 and S5 plays an important role in translational accuracy. Located at the interface of the 30S and 50S subunits. In Haloquadratum walsbyi (strain DSM 16790 / HBSQ001), this protein is Small ribosomal subunit protein uS12.